Here is a 294-residue protein sequence, read N- to C-terminus: 4-hydroxy-tetrahydrodipicolinate synthase (294 aa).

T45 is a binding site for pyruvate. Y133 acts as the Proton donor/acceptor in catalysis. Catalysis depends on K161, which acts as the Schiff-base intermediate with substrate. I203 provides a ligand contact to pyruvate.

This sequence belongs to the DapA family. In terms of assembly, homotetramer; dimer of dimers.

It is found in the cytoplasm. It catalyses the reaction L-aspartate 4-semialdehyde + pyruvate = (2S,4S)-4-hydroxy-2,3,4,5-tetrahydrodipicolinate + H2O + H(+). It functions in the pathway amino-acid biosynthesis; L-lysine biosynthesis via DAP pathway; (S)-tetrahydrodipicolinate from L-aspartate: step 3/4. Functionally, catalyzes the condensation of (S)-aspartate-beta-semialdehyde [(S)-ASA] and pyruvate to 4-hydroxy-tetrahydrodipicolinate (HTPA). This chain is 4-hydroxy-tetrahydrodipicolinate synthase, found in Shewanella sp. (strain ANA-3).